The sequence spans 328 residues: Phenylalanine--tRNA ligase alpha subunit (328 aa).

A Mg(2+)-binding site is contributed by Glu-245.

This sequence belongs to the class-II aminoacyl-tRNA synthetase family. Phe-tRNA synthetase alpha subunit type 1 subfamily. Tetramer of two alpha and two beta subunits. Mg(2+) is required as a cofactor.

Its subcellular location is the cytoplasm. It carries out the reaction tRNA(Phe) + L-phenylalanine + ATP = L-phenylalanyl-tRNA(Phe) + AMP + diphosphate + H(+). This Helicobacter pylori (strain HPAG1) protein is Phenylalanine--tRNA ligase alpha subunit.